The primary structure comprises 123 residues: uncharacterized protein (123 aa).

Residues 76–97 are disordered; it reads ENNKRKKKSEGERVRSPRTFRG.

This is an uncharacterized protein from Saccharomyces cerevisiae (strain ATCC 204508 / S288c) (Baker's yeast).